A 425-amino-acid chain; its full sequence is Histone-binding protein RBBP7 (425 aa).

WD repeat units lie at residues 47–122 (QWLP…KINH), 128–173 (RARY…LRLR), 181–217 (GLSW…KVVD), 228–269 (VVED…HSVD), 275–312 (VNCL…LHSF), 318–369 (EIFQ…LFIH), and 376–403 (ISDF…IWQM).

This sequence belongs to the WD repeat RBAP46/RBAP48/MSI1 family. In terms of assembly, binds directly to helix 1 of the histone fold of histone H4, a region that is not accessible when H4 is in chromatin.

The protein resides in the nucleus. Functionally, core histone-binding subunit that may target chromatin remodeling factors, histone acetyltransferases and histone deacetylases to their histone substrates in a manner that is regulated by nucleosomal DNA. Component of several complexes which regulate chromatin metabolism. The polypeptide is Histone-binding protein RBBP7 (rbbp7) (Xenopus tropicalis (Western clawed frog)).